A 125-amino-acid chain; its full sequence is Synaptobrevin (125 aa).

A disordered region spans residues Met1 to Ala46. Residues Met1–Lys103 are Cytoplasmic-facing. Pro residues predominate over residues Gly12–Pro34. Residues Arg40–Lys100 enclose the v-SNARE coiled-coil homology domain. Residues Met104 to Ala123 traverse the membrane as a helical; Anchor for type IV membrane protein segment. Residues Ala124 to Thr125 are Vesicular-facing.

Belongs to the synaptobrevin family.

The protein resides in the cytoplasmic vesicle. It is found in the secretory vesicle. Its subcellular location is the synaptic vesicle membrane. It localises to the synapse. The protein localises to the synaptosome. Intrinsic membrane protein of small synaptic vesicles. The polypeptide is Synaptobrevin (Doryteuthis pealeii (Longfin inshore squid)).